Consider the following 693-residue polypeptide: Elongation factor G (693 aa).

The tr-type G domain occupies 6-286 (KYTRNIGIAA…AICRYLPSPI (281 aa)). GTP-binding positions include 15–22 (AHIDAGKT), 83–87 (DTPGH), and 137–140 (NKMD).

This sequence belongs to the TRAFAC class translation factor GTPase superfamily. Classic translation factor GTPase family. EF-G/EF-2 subfamily.

The protein localises to the cytoplasm. Its function is as follows. Catalyzes the GTP-dependent ribosomal translocation step during translation elongation. During this step, the ribosome changes from the pre-translocational (PRE) to the post-translocational (POST) state as the newly formed A-site-bound peptidyl-tRNA and P-site-bound deacylated tRNA move to the P and E sites, respectively. Catalyzes the coordinated movement of the two tRNA molecules, the mRNA and conformational changes in the ribosome. The sequence is that of Elongation factor G from Karelsulcia muelleri (strain GWSS) (Sulcia muelleri).